A 983-amino-acid polypeptide reads, in one-letter code: Bifunctional glutamine synthetase adenylyltransferase/adenylyl-removing enzyme (983 aa).

The interval 1–468 (MTVENAKALF…KQYAALFAQA (468 aa)) is adenylyl removase. Residues 473–983 (AASGNLVFTG…FDKLVGHGAD (511 aa)) are adenylyl transferase.

Belongs to the GlnE family. Mg(2+) is required as a cofactor.

The enzyme catalyses [glutamine synthetase]-O(4)-(5'-adenylyl)-L-tyrosine + phosphate = [glutamine synthetase]-L-tyrosine + ADP. It carries out the reaction [glutamine synthetase]-L-tyrosine + ATP = [glutamine synthetase]-O(4)-(5'-adenylyl)-L-tyrosine + diphosphate. In terms of biological role, involved in the regulation of glutamine synthetase GlnA, a key enzyme in the process to assimilate ammonia. When cellular nitrogen levels are high, the C-terminal adenylyl transferase (AT) inactivates GlnA by covalent transfer of an adenylyl group from ATP to specific tyrosine residue of GlnA, thus reducing its activity. Conversely, when nitrogen levels are low, the N-terminal adenylyl removase (AR) activates GlnA by removing the adenylyl group by phosphorolysis, increasing its activity. The regulatory region of GlnE binds the signal transduction protein PII (GlnB) which indicates the nitrogen status of the cell. This chain is Bifunctional glutamine synthetase adenylyltransferase/adenylyl-removing enzyme, found in Brucella suis biovar 1 (strain 1330).